Consider the following 395-residue polypeptide: FAD-dependent urate hydroxylase (395 aa).

FAD is bound by residues glycine 11, 30–31 (ER), serine 43, and methionine 125. Substrate is bound by residues asparagine 180, arginine 206, and 218–220 (YFF). FAD-binding positions include aspartate 287 and 297–301 (GQGGC).

The protein belongs to the FAD-dependent urate hydroxylase family. In terms of assembly, monomer. It depends on FAD as a cofactor.

It carries out the reaction urate + NADH + O2 + H(+) = 5-hydroxyisourate + NAD(+) + H2O. Its pathway is purine metabolism; urate degradation. Its function is as follows. Catalyzes the hydroxylation of urate to 5-hydroxyisourate (HIU). Is likely to be involved in the urate degradation pathway to allantoin. Prefers NADH over NADPH as the electron donor. The protein is FAD-dependent urate hydroxylase of Mycolicibacterium vanbaalenii (strain DSM 7251 / JCM 13017 / BCRC 16820 / KCTC 9966 / NRRL B-24157 / PYR-1) (Mycobacterium vanbaalenii).